Reading from the N-terminus, the 140-residue chain is Large ribosomal subunit protein uL11 (140 aa).

It belongs to the universal ribosomal protein uL11 family. As to quaternary structure, part of the ribosomal stalk of the 50S ribosomal subunit. Interacts with L10 and the large rRNA to form the base of the stalk. L10 forms an elongated spine to which L12 dimers bind in a sequential fashion forming a multimeric L10(L12)X complex. Post-translationally, one or more lysine residues are methylated.

Functionally, forms part of the ribosomal stalk which helps the ribosome interact with GTP-bound translation factors. The chain is Large ribosomal subunit protein uL11 from Desulforapulum autotrophicum (strain ATCC 43914 / DSM 3382 / VKM B-1955 / HRM2) (Desulfobacterium autotrophicum).